Consider the following 458-residue polypeptide: Probable mitochondrial chaperone BCS1-B (458 aa).

Over 1 to 26 the chain is Mitochondrial intermembrane; it reads MENVITNNNKGLPKSILKFIPEPIQP. A helical transmembrane segment spans residues 27–47; the sequence is LFENPFFSAGFGLIGVGSILA. Topologically, residues 48-458 are mitochondrial matrix; it reads MGRKGFQQAM…INNLNELIKK (411 aa). An ATP-binding site is contributed by 248–255; it reads GPPGTGKS.

The protein belongs to the AAA ATPase family. BCS1 subfamily.

The protein localises to the mitochondrion inner membrane. The catalysed reaction is ATP + H2O = ADP + phosphate + H(+). Functionally, chaperone necessary for the assembly of mitochondrial respiratory chain complex III. The chain is Probable mitochondrial chaperone BCS1-B (bcsl1b) from Dictyostelium discoideum (Social amoeba).